A 468-amino-acid polypeptide reads, in one-letter code: Midnolin (468 aa).

One can recognise a Ubiquitin-like domain in the interval Met-31–Gly-105. Disordered regions lie at residues Pro-182–Lys-264 and Leu-404–Asp-447. Over residues Ala-185–Val-201 the composition is skewed to low complexity. Residues Pro-202 to Pro-213 show a composition bias toward pro residues. Composition is skewed to low complexity over residues Ser-237 to Pro-260 and Ser-419 to Ser-431.

Interacts with GCK; the interaction occurs preferentially at low glucose levels. Interacts with the proteasome.

It localises to the nucleus. The protein resides in the nucleolus. The protein localises to the cytoplasm. It is found in the cytosol. Functionally, facilitates the ubiquitin-independent proteasomal degradation of stimulus-induced transcription factors such as FOSB, EGR1, NR4A1, and IRF4 to the proteasome for degradation. Promotes also the degradation of other substrates such as CBX4. Plays a role in inhibiting the activity of glucokinase GCK and both glucose-induced and basal insulin secretion. The protein is Midnolin (MIDN) of Homo sapiens (Human).